A 139-amino-acid polypeptide reads, in one-letter code: Nucleoside diphosphate kinase (139 aa).

Positions 10, 58, 86, 92, 103, and 113 each coordinate ATP. H116 (pros-phosphohistidine intermediate) is an active-site residue.

This sequence belongs to the NDK family. As to quaternary structure, homotetramer. Mg(2+) is required as a cofactor.

The protein localises to the cytoplasm. It catalyses the reaction a 2'-deoxyribonucleoside 5'-diphosphate + ATP = a 2'-deoxyribonucleoside 5'-triphosphate + ADP. It carries out the reaction a ribonucleoside 5'-diphosphate + ATP = a ribonucleoside 5'-triphosphate + ADP. Its function is as follows. Major role in the synthesis of nucleoside triphosphates other than ATP. The ATP gamma phosphate is transferred to the NDP beta phosphate via a ping-pong mechanism, using a phosphorylated active-site intermediate. The polypeptide is Nucleoside diphosphate kinase (Phenylobacterium zucineum (strain HLK1)).